The following is a 117-amino-acid chain: Immunoglobulin heavy variable 5-51 (117 aa).

The signal sequence occupies residues 1 to 19 (MGSTAILALLLAVLQGVCA). Residues 20 to 44 (EVQLVQSGAEVKKPGESLKISCKGS) are framework-1. The 98-residue stretch at 20-117 (EVQLVQSGAE…SDTAMYYCAR (98 aa)) folds into the Ig-like domain. Cysteine 41 and cysteine 115 form a disulfide bridge. The complementarity-determining-1 stretch occupies residues 45–52 (GYSFTSYW). Positions 53 to 69 (IGWVRQMPGKGLEWMGI) are framework-2. The tract at residues 70–77 (IYPGDSDT) is complementarity-determining-2. Positions 78–115 (RYSPSFQGQVTISADKSISTAYLQWSSLKASDTAMYYC) are framework-3. Positions 116–117 (AR) are complementarity-determining-3.

As to quaternary structure, immunoglobulins are composed of two identical heavy chains and two identical light chains; disulfide-linked.

It is found in the secreted. The protein resides in the cell membrane. Functionally, v region of the variable domain of immunoglobulin heavy chains that participates in the antigen recognition. Immunoglobulins, also known as antibodies, are membrane-bound or secreted glycoproteins produced by B lymphocytes. In the recognition phase of humoral immunity, the membrane-bound immunoglobulins serve as receptors which, upon binding of a specific antigen, trigger the clonal expansion and differentiation of B lymphocytes into immunoglobulins-secreting plasma cells. Secreted immunoglobulins mediate the effector phase of humoral immunity, which results in the elimination of bound antigens. The antigen binding site is formed by the variable domain of one heavy chain, together with that of its associated light chain. Thus, each immunoglobulin has two antigen binding sites with remarkable affinity for a particular antigen. The variable domains are assembled by a process called V-(D)-J rearrangement and can then be subjected to somatic hypermutations which, after exposure to antigen and selection, allow affinity maturation for a particular antigen. This chain is Immunoglobulin heavy variable 5-51, found in Homo sapiens (Human).